The sequence spans 559 residues: NXPE family member 2 (559 aa).

The chain crosses the membrane as a helical span at residues 17-37 (AIARKLLLMLTFILIFWIIYL).

This sequence belongs to the NXPE family.

The protein resides in the membrane. The chain is NXPE family member 2 (NXPE2) from Homo sapiens (Human).